Reading from the N-terminus, the 110-residue chain is Nitrogenase-stabilizing/protective protein NifW (110 aa).

The protein belongs to the NifW family. As to quaternary structure, homotrimer; associates with NifD.

Its function is as follows. May protect the nitrogenase Fe-Mo protein from oxidative damage. The protein is Nitrogenase-stabilizing/protective protein NifW of Acidithiobacillus ferrooxidans (strain ATCC 23270 / DSM 14882 / CIP 104768 / NCIMB 8455) (Ferrobacillus ferrooxidans (strain ATCC 23270)).